Here is a 239-residue protein sequence, read N- to C-terminus: Small ribosomal subunit protein uS2 (239 aa).

The protein belongs to the universal ribosomal protein uS2 family.

The sequence is that of Small ribosomal subunit protein uS2 from Francisella philomiragia subsp. philomiragia (strain ATCC 25017 / CCUG 19701 / FSC 153 / O#319-036).